The following is a 477-amino-acid chain: Cytochrome P450 monooxygenase poxC (477 aa).

A helical membrane pass occupies residues 24–41 (AWHFAVLSFVYVIARSIY). Heme is bound at residue C420.

It belongs to the cytochrome P450 family. Heme serves as cofactor.

The protein localises to the membrane. It participates in secondary metabolite biosynthesis. Functionally, cytochrome P450 monooxygenase; part of the gene cluster that mediates the biosynthesis of oxaleimides, cytotoxic compounds containing an unusual disubstituted succinimide moiety. The first step of the pathway is provided by the HR-PKS poxF that serves in a new mode of collaborative biosynthesis with the PKS-NRPS poxE, by providing the olefin containing amino acid substrate via the synthesis of an ACP-bound dec-4-enoate. The cytochrome P450 monooxygenase poxM-catalyzed oxidation at the alpha-position creates the enzyme-bound 2-hydroxydec-4-enoyl-ACP thioester, which may be prone to spontaneous hydrolysis to yield 2-hydroxydec-4-enoic acid due to increased electrophilicity of the carbonyl. 2-hydroxydec-4-enoic acid can then be further oxidized by poxM to yield the alpha-ketoacid 2-oxodec-4-enoicacid, which is reductively aminated by the aminotransferase poxL to yield (S,E)-2-aminodec-4-enoic acid. The Hybrid PKS-NRPS synthetase poxE then performs condensation between the octaketide product of its PKS modules and the amino group of (S,E)-2-aminodec-4-enoic acid which is activated and incorporated by the adenylation domain. The resulting aminoacyl product can be cyclized by the Diels-Alderase PoxQ and reductively released by the reductive (R) domain of poxE to yield an aldehyde intermediate. The released aldehyde is then substrate for a Knoevenagel condensation by the hydrolyase poxO followed by an oxidation at the 5-position of the pyrrolidone ring. The presence of the olefin from the amino acid building block allows for migration of the substituted allyl group to occur. This allylic transposition reaction takes place in a conjugate addition, semipinacol-like fashion to yield a succinimide intermediate. Iterative two-electron oxidations of the C7 methyl of the succinimide intermediate to the carboxylic acid can be catalyzed by one of two remaining cytochrome P450 monooxygenasess poxC or poxD to yield oxaleimide A. Subsequent oxidation yields the maleimide scaffold oxaleimide I. Both oxaleimide A and oxaleimide I can undergo oxidative modifications in the decalin ring to yield the series of products oxaleimides B to H. The chain is Cytochrome P450 monooxygenase poxC from Penicillium oxalicum (strain 114-2 / CGMCC 5302) (Penicillium decumbens).